The chain runs to 381 residues: MNLNFMPLLHAYNHASIDFHFNSSARDFCVHEVPLYEFSNTGEHAVIQVRKSGLSTLEMLQIFSQILGVRIAELGYAGLKDKNALTTQFISLPKKYAPLLEKNTSNFQEKNLKILSLNYHHNKIKLGHLKGNRFFMRFKKMTPLNAQKTEQVLEQIARFGMPNYFGPQRFGKFNDNHQEGLKILQNQTKFAHQKLNAFLISSYQSYLFNALLSKRLEISKIISAFSVKENLEFFKQKNLNINPNTLKALKNQAHPFKILEGDVMRHYPYGKFFDALELEKESERFLKKEAAPTGLLDGKKALYAKNLSLEIEKEFQHNLLSSHAKTLGSRRFFWVFAENVTSQYVKEKAQFELGFYLPKGSYASALLKEIKHEKGENNDEF.

Asp81 serves as the catalytic Nucleophile. The 176-residue stretch at 160-335 (GMPNYFGPQR…TLGSRRFFWV (176 aa)) folds into the TRUD domain.

Belongs to the pseudouridine synthase TruD family.

It catalyses the reaction uridine(13) in tRNA = pseudouridine(13) in tRNA. In terms of biological role, responsible for synthesis of pseudouridine from uracil-13 in transfer RNAs. The protein is tRNA pseudouridine synthase D of Helicobacter pylori (strain Shi470).